The sequence spans 730 residues: Phosphoribosylformylglycinamidine synthase subunit PurL (730 aa).

Residue histidine 44 is part of the active site. Residues tyrosine 47 and lysine 86 each contribute to the ATP site. Residue glutamate 88 coordinates Mg(2+). Substrate-binding positions include 89 to 92 (SHNH) and arginine 111. Histidine 90 (proton acceptor) is an active-site residue. Position 112 (aspartate 112) interacts with Mg(2+). Glutamine 235 contacts substrate. Aspartate 263 serves as a coordination point for Mg(2+). 307–309 (ESQ) is a binding site for substrate. Asparagine 489 and glycine 526 together coordinate ATP. Residue asparagine 527 participates in Mg(2+) binding. Serine 529 lines the substrate pocket.

Belongs to the FGAMS family. As to quaternary structure, monomer. Part of the FGAM synthase complex composed of 1 PurL, 1 PurQ and 2 PurS subunits.

It is found in the cytoplasm. The enzyme catalyses N(2)-formyl-N(1)-(5-phospho-beta-D-ribosyl)glycinamide + L-glutamine + ATP + H2O = 2-formamido-N(1)-(5-O-phospho-beta-D-ribosyl)acetamidine + L-glutamate + ADP + phosphate + H(+). The protein operates within purine metabolism; IMP biosynthesis via de novo pathway; 5-amino-1-(5-phospho-D-ribosyl)imidazole from N(2)-formyl-N(1)-(5-phospho-D-ribosyl)glycinamide: step 1/2. In terms of biological role, part of the phosphoribosylformylglycinamidine synthase complex involved in the purines biosynthetic pathway. Catalyzes the ATP-dependent conversion of formylglycinamide ribonucleotide (FGAR) and glutamine to yield formylglycinamidine ribonucleotide (FGAM) and glutamate. The FGAM synthase complex is composed of three subunits. PurQ produces an ammonia molecule by converting glutamine to glutamate. PurL transfers the ammonia molecule to FGAR to form FGAM in an ATP-dependent manner. PurS interacts with PurQ and PurL and is thought to assist in the transfer of the ammonia molecule from PurQ to PurL. This chain is Phosphoribosylformylglycinamidine synthase subunit PurL, found in Pelagibacter ubique (strain HTCC1062).